The following is a 256-amino-acid chain: 3-methyl-2-oxobutanoate hydroxymethyltransferase (256 aa).

The Mg(2+) site is built by aspartate 42 and aspartate 86. 3-methyl-2-oxobutanoate contacts are provided by residues 42 to 43 (DS), aspartate 86, and lysine 116. Residue glutamate 118 coordinates Mg(2+). Residue glutamate 185 is the Proton acceptor of the active site.

Belongs to the PanB family. In terms of assembly, homodecamer; pentamer of dimers. The cofactor is Mg(2+).

The protein resides in the cytoplasm. The catalysed reaction is 3-methyl-2-oxobutanoate + (6R)-5,10-methylene-5,6,7,8-tetrahydrofolate + H2O = 2-dehydropantoate + (6S)-5,6,7,8-tetrahydrofolate. It participates in cofactor biosynthesis; (R)-pantothenate biosynthesis; (R)-pantoate from 3-methyl-2-oxobutanoate: step 1/2. In terms of biological role, catalyzes the reversible reaction in which hydroxymethyl group from 5,10-methylenetetrahydrofolate is transferred onto alpha-ketoisovalerate to form ketopantoate. This chain is 3-methyl-2-oxobutanoate hydroxymethyltransferase, found in Prochlorococcus marinus (strain SARG / CCMP1375 / SS120).